The chain runs to 932 residues: Protocadherin gamma-A7 (932 aa).

The first 28 residues, 1-28, serve as a signal peptide directing secretion; the sequence is MAAQPRGGDCRGFVLLSILLGTPWEAWA. Cadherin domains are found at residues 29–133, 134–242, 243–347, 348–452, 453–562, and 570–682; these read GRIL…VPRF, LTEE…TPVF, SLPQ…APEV, TMTS…PPTF, PHSS…PPEI, and DGST…EPSD. At 29–692 the chain is on the extracellular side; that stretch reads GRILYSVSEE…GPYNYDLTLY (664 aa). Asn-419 and Asn-545 each carry an N-linked (GlcNAc...) asparagine glycan. Residues 693 to 713 form a helical membrane-spanning segment; it reads LVVAVAAVSCVFLAFVLVLLA. Over 714 to 932 the chain is Cytoplasmic; it reads LRLRRWHKSR…KKKSGKKEKK (219 aa). Disordered regions lie at residues 804-841 and 902-932; these read VPSIQQAPPNTDWRFSQAQRPGTSGSQNGDDTGTWPNN and ATLTNAAGKRDGKAPAGGNGNKKKSGKKEKK. Positions 806 to 841 are enriched in polar residues; it reads SIQQAPPNTDWRFSQAQRPGTSGSQNGDDTGTWPNN. Basic residues predominate over residues 922-932; the sequence is NKKKSGKKEKK.

It is found in the cell membrane. Its function is as follows. Potential calcium-dependent cell-adhesion protein. May be involved in the establishment and maintenance of specific neuronal connections in the brain. The sequence is that of Protocadherin gamma-A7 (PCDHGA7) from Pan troglodytes (Chimpanzee).